A 535-amino-acid polypeptide reads, in one-letter code: Solute carrier family 22 member 7 (535 aa).

12 helical membrane passes run 21–41 (LVLMALPRMLLPMHFLLPVFM), 144–164 (ITSTCFFIGVLVGAVVYGYLS), 178–198 (VSSLVLGLMSAASINYIMFVV), 202–222 (LTGSALAGFTIIVLPLELEWL), 232–252 (VISTVFWSGGVLLLALVGYLI), 257–277 (WLLLAATLPCVPGIISIWWVP), 344–364 (ISLCCMMVWFGVNFSYYGLTL), 375–395 (QTQLLFGAVELPSKIMVYFLV), 402–422 (LTEAGMLLGAALTFGTSLLVS), 429–449 (ITALVVVGKAFSEAAFTTAYL), 464–484 (LGLTALMGRLGASLAPLAALL), and 489–509 (LLLPKVAYGGIALVAACTALL).

Belongs to the major facilitator (TC 2.A.1) superfamily. Organic cation transporter (TC 2.A.1.19) family. In terms of tissue distribution, expressed in liver and kidney. Expressed at low levels in adipose tissue. Expressed in fetal liver. In kidney, expressed at the brush border of the proximal tubule S3 segment (S3) in the outer stripe and medullary rays. In kidney, expression is higher in female than male.

It localises to the basolateral cell membrane. The protein localises to the apical cell membrane. The protein resides in the cell membrane. It carries out the reaction orotate(out) + L-glutamate(in) = orotate(in) + L-glutamate(out). It catalyses the reaction 3',5'-cyclic GMP(in) = 3',5'-cyclic GMP(out). The catalysed reaction is GMP(in) = GMP(out). The enzyme catalyses 2'-deoxyguanosine(in) = 2'-deoxyguanosine(out). It carries out the reaction GDP(in) = GDP(out). It catalyses the reaction guanosine(in) = guanosine(out). The catalysed reaction is GTP(in) = GTP(out). The enzyme catalyses 3',5'-cyclic AMP(in) = 3',5'-cyclic AMP(out). It carries out the reaction creatinine(in) = creatinine(out). It catalyses the reaction prostaglandin E2(out) = prostaglandin E2(in). The catalysed reaction is 2-oxoglutarate(in) = 2-oxoglutarate(out). The enzyme catalyses glutarate(in) = glutarate(out). It carries out the reaction urate(out) = urate(in). It catalyses the reaction estrone 3-sulfate(out) = estrone 3-sulfate(in). In terms of biological role, functions as a Na(+)-independent bidirectional multispecific transporter. Contributes to the renal and hepatic elimination of endogenous organic compounds from the systemic circulation into the urine and bile, respectively. Capable of transporting a wide range of purine and pyrimidine nucleobases, nucleosides, and nucleotides with cGMP, 2'deoxyguanosine and GMP being the preferred substrates. Functions as a pH- and chloride-independent cGMP bidirectional facilitative transporter that can regulate both intracellular and extracellular levels of cGMP and may be involved in cGMP signaling pathways. Mediates orotate/glutamate bidirectional exchange and most likely display a physiological role in hepatic release of glutamate into the blood. Involved in renal secretion and possible reabsorption of creatinine. Able to uptake prostaglandin E2 (PGE2) and may contribute to PGE2 renal excretion. Also transports alpha-ketoglutarate and urate. Apart from the orotate/glutamate exchange, the counterions for the uptake of other SLC22A7/OAT2 substrates remain to be identified. This Rattus norvegicus (Rat) protein is Solute carrier family 22 member 7.